The chain runs to 140 residues: Large ribosomal subunit protein bL17 (140 aa).

The protein belongs to the bacterial ribosomal protein bL17 family. In terms of assembly, part of the 50S ribosomal subunit. Contacts protein L32.

The sequence is that of Large ribosomal subunit protein bL17 from Rhizobium etli (strain ATCC 51251 / DSM 11541 / JCM 21823 / NBRC 15573 / CFN 42).